The chain runs to 105 residues: Transmembrane protein 273 (105 aa).

Residues 1 to 19 form the signal peptide; it reads MNLGVSMLRILFLLDVGGA. At 20-38 the chain is on the extracellular side; sequence QVLATGKTPGAEIDFKYAL. The helical transmembrane segment at 39-59 threads the bilayer; it reads IGTAVGVAISAGFLALKICMI. At 60–105 the chain is on the cytoplasmic side; that stretch reads RRHLFDDDSSDLKSTPGGLSDTIPLKKRAPRRNHNFSKRDAQVIEL.

Its subcellular location is the membrane. This is Transmembrane protein 273 from Homo sapiens (Human).